A 342-amino-acid polypeptide reads, in one-letter code: Glycerol-3-phosphate dehydrogenase [NAD(P)+] (342 aa).

3 residues coordinate NADPH: Ser13, Trp14, and Lys108. Residues Lys108, Gly139, and Ser141 each coordinate sn-glycerol 3-phosphate. Ala143 contacts NADPH. 5 residues coordinate sn-glycerol 3-phosphate: Lys194, Asp247, Ser257, Arg258, and Asn259. Lys194 serves as the catalytic Proton acceptor. Arg258 contributes to the NADPH binding site. Residues Val282 and Glu284 each contribute to the NADPH site.

The protein belongs to the NAD-dependent glycerol-3-phosphate dehydrogenase family.

The protein localises to the cytoplasm. It catalyses the reaction sn-glycerol 3-phosphate + NAD(+) = dihydroxyacetone phosphate + NADH + H(+). The catalysed reaction is sn-glycerol 3-phosphate + NADP(+) = dihydroxyacetone phosphate + NADPH + H(+). It participates in membrane lipid metabolism; glycerophospholipid metabolism. Its function is as follows. Catalyzes the reduction of the glycolytic intermediate dihydroxyacetone phosphate (DHAP) to sn-glycerol 3-phosphate (G3P), the key precursor for phospholipid synthesis. In Lactococcus lactis subsp. cremoris (strain MG1363), this protein is Glycerol-3-phosphate dehydrogenase [NAD(P)+].